Reading from the N-terminus, the 188-residue chain is Pro-FMRFamide-related neuropeptide VF (188 aa).

An N-terminal signal peptide occupies residues 1–26 (MEIISLKRFILLTVATSSFLTSNTFC). Positions 27–57 (TDEFMMPHFHSKEGDGKYSQLRGIPKGEKER) are excised as a propeptide. F94 is modified (phenylalanine amide). Residues 97 to 106 (TIDEKRSPAA) constitute a propeptide that is removed on maturation. Disordered stretches follow at residues 116 to 144 (SHFP…QKPL) and 163 to 188 (IQSP…KPEK). Position 125 is a phenylalanine amide (F125). The propeptide occupies 128 to 188 (TTARSPKTPA…TDDAERKPEK (61 aa)).

It belongs to the FARP (FMRFamide related peptide) family.

Its subcellular location is the secreted. Its function is as follows. Efficiently inhibits forskolin-induced production of cAMP. Acts as a potent negative regulator of gonadotropin synthesis and secretion. Induces secretion of prolactin. Efficiently inhibits forskolin-induced production of cAMP. Blocks morphine-induced analgesia. The polypeptide is Pro-FMRFamide-related neuropeptide VF (Npvf) (Mus musculus (Mouse)).